We begin with the raw amino-acid sequence, 558 residues long: Oligo-1,6-glucosidase (558 aa).

Ca(2+) contacts are provided by D21, N23, D25, and D29. D199 functions as the Nucleophile in the catalytic mechanism. The active-site Proton donor is E255.

Belongs to the glycosyl hydrolase 13 family.

It is found in the cytoplasm. The catalysed reaction is Hydrolysis of (1-&gt;6)-alpha-D-glucosidic linkages in some oligosaccharides produced from starch and glycogen by alpha-amylase, and in isomaltose.. This chain is Oligo-1,6-glucosidase (malL), found in Bacillus cereus.